Consider the following 341-residue polypeptide: 4-amino-5-hydroxymethyl-2-methylpyrimidine phosphate synthase (341 aa).

Position 62 is an N6-(pyridoxal phosphate)lysine (Lys-62). His-66 is an active-site residue. 115 to 118 (GEFG) lines the pyridoxal 5'-phosphate pocket. The short motif at 195 to 199 (CCCFC) is the CCCFC; essential for catalytic activity, may be the site of iron coordination element.

This sequence belongs to the NMT1/THI5 family. As to quaternary structure, homodimer. Fe cation is required as a cofactor.

The catalysed reaction is N(6)-(pyridoxal phosphate)-L-lysyl-[4-amino-5-hydroxymethyl-2-methylpyrimidine phosphate synthase] + L-histidyl-[4-amino-5-hydroxymethyl-2-methylpyrimidine phosphate synthase] + 2 Fe(3+) + 4 H2O = L-lysyl-[4-amino-5-hydroxymethyl-2-methylpyrimidine phosphate synthase] + (2S)-2-amino-5-hydroxy-4-oxopentanoyl-[4-amino-5-hydroxymethyl-2-methylpyrimidine phosphate synthase] + 4-amino-2-methyl-5-(phosphooxymethyl)pyrimidine + 3-oxopropanoate + 2 Fe(2+) + 2 H(+). It participates in cofactor biosynthesis; thiamine diphosphate biosynthesis. In terms of biological role, responsible for the formation of the pyrimidine heterocycle in the thiamine biosynthesis pathway. Catalyzes the formation of hydroxymethylpyrimidine phosphate (HMP-P) from histidine and pyridoxal phosphate (PLP). The protein uses PLP and the active site histidine to form HMP-P, generating an inactive enzyme. The enzyme can only undergo a single turnover, which suggests it is a suicide enzyme. This chain is 4-amino-5-hydroxymethyl-2-methylpyrimidine phosphate synthase, found in Uromyces fabae (Rust fungus).